The following is a 339-amino-acid chain: Tryptophan--tRNA ligase (339 aa).

Residues 11–13 (QPT) and 19–20 (GN) each bind ATP. Residues 12–20 (PTGAIHIGN) carry the 'HIGH' region motif. An L-tryptophan-binding site is contributed by D135. ATP is bound by residues 147–149 (GED), I191, and 200–204 (KMSKS). The short motif at 200–204 (KMSKS) is the 'KMSKS' region element.

The protein belongs to the class-I aminoacyl-tRNA synthetase family. Homodimer.

Its subcellular location is the cytoplasm. The catalysed reaction is tRNA(Trp) + L-tryptophan + ATP = L-tryptophyl-tRNA(Trp) + AMP + diphosphate + H(+). Its function is as follows. Catalyzes the attachment of tryptophan to tRNA(Trp). This chain is Tryptophan--tRNA ligase, found in Prochlorococcus marinus (strain SARG / CCMP1375 / SS120).